A 123-amino-acid chain; its full sequence is Keratin-associated protein 2-2 (123 aa).

Residues 5-112 (CCGSTFSSLS…SVQSPCGQPT (108 aa)) form an 11 X 5 AA repeats of C-C-[CDPQRWG]-[APRS]-[CIPSTVD] region.

It belongs to the KRTAP type 2 family. In terms of assembly, interacts with hair keratins.

In the hair cortex, hair keratin intermediate filaments are embedded in an interfilamentous matrix, consisting of hair keratin-associated proteins (KRTAP), which are essential for the formation of a rigid and resistant hair shaft through their extensive disulfide bond cross-linking with abundant cysteine residues of hair keratins. The matrix proteins include the high-sulfur and high-glycine-tyrosine keratins. In Homo sapiens (Human), this protein is Keratin-associated protein 2-2 (KRTAP2-2).